The primary structure comprises 437 residues: 3-phosphoshikimate 1-carboxyvinyltransferase (437 aa).

Lys-28, Ser-29, and Arg-33 together coordinate 3-phosphoshikimate. Residue Lys-28 coordinates phosphoenolpyruvate. 2 residues coordinate phosphoenolpyruvate: Gly-97 and Arg-125. Residues Ser-168, Ser-169, Gln-170, Glu-316, and His-343 each coordinate 3-phosphoshikimate. Gln-170 provides a ligand contact to phosphoenolpyruvate. Glu-316 functions as the Proton acceptor in the catalytic mechanism. Arg-347, Arg-388, and Lys-413 together coordinate phosphoenolpyruvate.

The protein belongs to the EPSP synthase family. In terms of assembly, monomer.

It localises to the cytoplasm. The catalysed reaction is 3-phosphoshikimate + phosphoenolpyruvate = 5-O-(1-carboxyvinyl)-3-phosphoshikimate + phosphate. It participates in metabolic intermediate biosynthesis; chorismate biosynthesis; chorismate from D-erythrose 4-phosphate and phosphoenolpyruvate: step 6/7. In terms of biological role, catalyzes the transfer of the enolpyruvyl moiety of phosphoenolpyruvate (PEP) to the 5-hydroxyl of shikimate-3-phosphate (S3P) to produce enolpyruvyl shikimate-3-phosphate and inorganic phosphate. In Rhodococcus erythropolis (strain PR4 / NBRC 100887), this protein is 3-phosphoshikimate 1-carboxyvinyltransferase.